The primary structure comprises 463 residues: Protein MRG3-like (463 aa).

Residues 54–74 form a helical membrane-spanning segment; the sequence is WVLSTGIVSFIAFNIWWVYWP. 4 TPR repeats span residues 84–118, 128–161, 358–389, and 409–442; these read KILRKGLHSEIKKEGANYQKSLEYYLEALEECKAE, TGIEIKIGEMYEKLHMYNDATALYGDMLKKFYNE, ELIRSRLQENQNSCLQYSADCYKSIISFANEN, and SLAHYGIGVINLHKGRLRASKKELKKAIRISEMI.

The protein belongs to the MGR3 family.

It localises to the membrane. The sequence is that of Protein MRG3-like from Saccharomyces cerevisiae (strain ATCC 204508 / S288c) (Baker's yeast).